We begin with the raw amino-acid sequence, 398 residues long: Arginine biosynthesis bifunctional protein ArgJ (398 aa).

Substrate is bound by residues T148, K174, T185, E271, N393, and T398. The active-site Nucleophile is T185.

The protein belongs to the ArgJ family. Heterotetramer of two alpha and two beta chains.

It localises to the cytoplasm. The enzyme catalyses N(2)-acetyl-L-ornithine + L-glutamate = N-acetyl-L-glutamate + L-ornithine. The catalysed reaction is L-glutamate + acetyl-CoA = N-acetyl-L-glutamate + CoA + H(+). The protein operates within amino-acid biosynthesis; L-arginine biosynthesis; L-ornithine and N-acetyl-L-glutamate from L-glutamate and N(2)-acetyl-L-ornithine (cyclic): step 1/1. It functions in the pathway amino-acid biosynthesis; L-arginine biosynthesis; N(2)-acetyl-L-ornithine from L-glutamate: step 1/4. Its function is as follows. Catalyzes two activities which are involved in the cyclic version of arginine biosynthesis: the synthesis of N-acetylglutamate from glutamate and acetyl-CoA as the acetyl donor, and of ornithine by transacetylation between N(2)-acetylornithine and glutamate. This chain is Arginine biosynthesis bifunctional protein ArgJ, found in Listeria monocytogenes serovar 1/2a (strain ATCC BAA-679 / EGD-e).